Consider the following 317-residue polypeptide: Ribosomal protein L11 methyltransferase (317 aa).

Thr-158, Gly-179, Asp-201, and Asn-244 together coordinate S-adenosyl-L-methionine.

This sequence belongs to the methyltransferase superfamily. PrmA family.

It is found in the cytoplasm. It carries out the reaction L-lysyl-[protein] + 3 S-adenosyl-L-methionine = N(6),N(6),N(6)-trimethyl-L-lysyl-[protein] + 3 S-adenosyl-L-homocysteine + 3 H(+). Its function is as follows. Methylates ribosomal protein L11. This Streptococcus pyogenes serotype M28 (strain MGAS6180) protein is Ribosomal protein L11 methyltransferase.